A 389-amino-acid chain; its full sequence is Glutamate 5-kinase (389 aa).

ATP is bound at residue Lys-16. Substrate contacts are provided by Ser-56, Asp-143, and Asn-155. Position 175 to 176 (175 to 176) interacts with ATP; that stretch reads SD. In terms of domain architecture, PUA spans 281–358; it reads AGELHVDDGA…AEIETILGYP (78 aa).

This sequence belongs to the glutamate 5-kinase family.

The protein localises to the cytoplasm. The enzyme catalyses L-glutamate + ATP = L-glutamyl 5-phosphate + ADP. Its pathway is amino-acid biosynthesis; L-proline biosynthesis; L-glutamate 5-semialdehyde from L-glutamate: step 1/2. Catalyzes the transfer of a phosphate group to glutamate to form L-glutamate 5-phosphate. In Rhizobium johnstonii (strain DSM 114642 / LMG 32736 / 3841) (Rhizobium leguminosarum bv. viciae), this protein is Glutamate 5-kinase.